The following is a 264-amino-acid chain: uncharacterized protein (264 aa).

The chain crosses the membrane as a helical span at residues 7–27; sequence LTLGICLVLLIILIVGYVIMT.

Belongs to the staphylococcal tandem lipoprotein family.

The protein resides in the cell membrane. This is an uncharacterized protein from Staphylococcus aureus (strain NCTC 8325 / PS 47).